Reading from the N-terminus, the 216-residue chain is Uracil phosphoribosyltransferase (216 aa).

Residues arginine 85, arginine 110, and 135–143 each bind 5-phospho-alpha-D-ribose 1-diphosphate; that span reads DPMVATGYS. Residues isoleucine 200 and 205–207 each bind uracil; that span reads GDA. Aspartate 206 is a binding site for 5-phospho-alpha-D-ribose 1-diphosphate.

It belongs to the UPRTase family. Mg(2+) serves as cofactor.

The catalysed reaction is UMP + diphosphate = 5-phospho-alpha-D-ribose 1-diphosphate + uracil. Its pathway is pyrimidine metabolism; UMP biosynthesis via salvage pathway; UMP from uracil: step 1/1. Allosterically activated by GTP. Functionally, catalyzes the conversion of uracil and 5-phospho-alpha-D-ribose 1-diphosphate (PRPP) to UMP and diphosphate. The protein is Uracil phosphoribosyltransferase of Burkholderia lata (strain ATCC 17760 / DSM 23089 / LMG 22485 / NCIMB 9086 / R18194 / 383).